A 361-amino-acid polypeptide reads, in one-letter code: Aminomethyltransferase (361 aa).

Belongs to the GcvT family. In terms of assembly, the glycine cleavage system is composed of four proteins: P, T, L and H.

The enzyme catalyses N(6)-[(R)-S(8)-aminomethyldihydrolipoyl]-L-lysyl-[protein] + (6S)-5,6,7,8-tetrahydrofolate = N(6)-[(R)-dihydrolipoyl]-L-lysyl-[protein] + (6R)-5,10-methylene-5,6,7,8-tetrahydrofolate + NH4(+). The glycine cleavage system catalyzes the degradation of glycine. The polypeptide is Aminomethyltransferase (Phocaeicola vulgatus (strain ATCC 8482 / DSM 1447 / JCM 5826 / CCUG 4940 / NBRC 14291 / NCTC 11154) (Bacteroides vulgatus)).